The following is a 315-amino-acid chain: MLKNKILTTTLSVSLLAPLANPLLENAKAANDTEDIGKGSDIEIIKRTEDKTSNKWGVTQNIQFDFVKDKKYNKDALILKMQGFISSRTTYYNYKKTNHVKAMRWPFQYNIGLKTNDKYVSLINYLPKNKIESTNVSQTLGYNIGGNFQSAPSLGGNGSFNYSKSISYTQQNYVSEVEQQNSKSVLWGVKANSFATESGQKSAFDSDLFVGYKPHSKDPRDYFVPDSELPPLVQSGFNPSFIATVSHEKGSSDTSEFEITYGRNMDVTHAIKRSTHYGNSYLDGHRVHNAFVNRNYTVKYEVNWKTHEIKVKGQN.

A signal peptide spans 1–29; the sequence is MLKNKILTTTLSVSLLAPLANPLLENAKA.

This sequence belongs to the aerolysin family. As to quaternary structure, toxicity requires sequential binding and synergistic association of a class S and a class F component which form heterooligomeric complexes. HlgB (class F) associates with either hlgA thus forming an AB toxin or with hlgC thus forming a CB toxin.

The protein resides in the secreted. Its function is as follows. Toxin that seems to act by forming pores in the membrane of the cell. Has a hemolytic and a leucotoxic activity. The sequence is that of Gamma-hemolysin component C (hlgC) from Staphylococcus aureus (strain NCTC 8325 / PS 47).